The chain runs to 441 residues: G-protein coupled receptor family C group 5 member C (441 aa).

The first 22 residues, 1–22 (MATHKTLLMCLGLPLFFPGALA), serve as a signal peptide directing secretion. The Extracellular portion of the chain corresponds to 23–49 (QNHAPPGCSPDLDPLYYNLCDRSGAWG). Residues 50–70 (IVLEAVAGAGIITTFVLTIIL) form a helical membrane-spanning segment. The Cytoplasmic portion of the chain corresponds to 71 to 84 (VASLPFVQDTKKRS). A helical transmembrane segment spans residues 85 to 105 (LLGTQVFFLLGTLGLFCLVFA). Residues 106 to 119 (CVVKPDFSTCASRR) lie on the Extracellular side of the membrane. The helical transmembrane segment at 120 to 140 (FLFGVLFAICFSCLIAHTLSL) threads the bilayer. At 141-154 (NFLARKNHGPRGWV) the chain is on the cytoplasmic side. A helical transmembrane segment spans residues 155–175 (IFTVALLLTLVEVIINTEWLI). The Extracellular segment spans residues 176–207 (ITLVRGGGQVSTPGNGSADWTVTSPCAIANMD). Asn190 carries an N-linked (GlcNAc...) asparagine glycan. A helical membrane pass occupies residues 208-228 (FVMALIYVMLLLLAAFLGAWP). Residues 229-240 (TLCGRFKRWRKH) lie on the Cytoplasmic side of the membrane. Residues 241–261 (GVFVLLTTATSIAIWVVWIVM) form a helical membrane-spanning segment. Topologically, residues 262–278 (YTYGNKQHHSPTWDDPT) are extracellular. Residues 279 to 299 (LAIALAANAWTFVFFYVIPEV) form a helical membrane-spanning segment. The Cytoplasmic portion of the chain corresponds to 300–441 (SQVTKPSPEQ…DQSPKNKTRW (142 aa)). Residues Ser343, Ser382, Ser402, and Ser405 each carry the phosphoserine modification. Tyr413 is modified (phosphotyrosine). The disordered stretch occupies residues 419-441 (QVATPTKDGKISQDQSPKNKTRW). Position 422 is a phosphothreonine (Thr422). A compositionally biased stretch (polar residues) spans 430-441 (SQDQSPKNKTRW). Ser434 carries the post-translational modification Phosphoserine.

This sequence belongs to the G-protein coupled receptor 3 family.

It localises to the cell membrane. Functionally, this retinoic acid-inducible G-protein coupled receptor provide evidence for a possible interaction between retinoid and G-protein signaling pathways. This Rattus norvegicus (Rat) protein is G-protein coupled receptor family C group 5 member C (Gprc5c).